The chain runs to 485 residues: Alpha-amylase (485 aa).

A signal peptide spans methionine 1–glycine 18. A Pyrrolidone carboxylic acid modification is found at glutamine 19. Cysteines 46 and 102 form a disulfide. Residues asparagine 116, arginine 164, and aspartate 173 each contribute to the Ca(2+) site. An intrachain disulfide couples cysteine 152 to cysteine 166. Arginine 201 contacts chloride. Aspartate 203 functions as the Nucleophile in the catalytic mechanism. Ca(2+) is bound at residue histidine 207. Residue glutamate 240 is the Proton donor of the active site. Asparagine 303 and arginine 339 together coordinate chloride. Residues cysteine 439 and cysteine 451 are joined by a disulfide bond. Asparagine 448 carries N-linked (GlcNAc...) asparagine glycosylation.

This sequence belongs to the glycosyl hydrolase 13 family. Monomer. Ca(2+) is required as a cofactor. It depends on chloride as a cofactor. As to expression, expressed in larval and adult gut.

The protein resides in the secreted. The catalysed reaction is Endohydrolysis of (1-&gt;4)-alpha-D-glucosidic linkages in polysaccharides containing three or more (1-&gt;4)-alpha-linked D-glucose units.. This is Alpha-amylase from Phaedon cochleariae (Mustard beetle).